The sequence spans 264 residues: Acyl-[acyl-carrier-protein]--UDP-N-acetylglucosamine O-acyltransferase (264 aa).

Belongs to the transferase hexapeptide repeat family. LpxA subfamily. As to quaternary structure, homotrimer.

It localises to the cytoplasm. The catalysed reaction is a (3R)-hydroxyacyl-[ACP] + UDP-N-acetyl-alpha-D-glucosamine = a UDP-3-O-[(3R)-3-hydroxyacyl]-N-acetyl-alpha-D-glucosamine + holo-[ACP]. Its pathway is glycolipid biosynthesis; lipid IV(A) biosynthesis; lipid IV(A) from (3R)-3-hydroxytetradecanoyl-[acyl-carrier-protein] and UDP-N-acetyl-alpha-D-glucosamine: step 1/6. Functionally, involved in the biosynthesis of lipid A, a phosphorylated glycolipid that anchors the lipopolysaccharide to the outer membrane of the cell. The protein is Acyl-[acyl-carrier-protein]--UDP-N-acetylglucosamine O-acyltransferase of Glaesserella parasuis serovar 5 (strain SH0165) (Haemophilus parasuis).